The following is a 597-amino-acid chain: Elongation factor 4 (597 aa).

In terms of domain architecture, tr-type G spans lysine 2–alanine 184. Residues aspartate 14–threonine 19 and asparagine 131–aspartate 134 contribute to the GTP site.

It belongs to the TRAFAC class translation factor GTPase superfamily. Classic translation factor GTPase family. LepA subfamily.

The protein localises to the cell inner membrane. It catalyses the reaction GTP + H2O = GDP + phosphate + H(+). In terms of biological role, required for accurate and efficient protein synthesis under certain stress conditions. May act as a fidelity factor of the translation reaction, by catalyzing a one-codon backward translocation of tRNAs on improperly translocated ribosomes. Back-translocation proceeds from a post-translocation (POST) complex to a pre-translocation (PRE) complex, thus giving elongation factor G a second chance to translocate the tRNAs correctly. Binds to ribosomes in a GTP-dependent manner. In Neisseria meningitidis serogroup A / serotype 4A (strain DSM 15465 / Z2491), this protein is Elongation factor 4.